Consider the following 977-residue polypeptide: Probable UDP-N-acetylglucosamine--peptide N-acetylglucosaminyltransferase SEC (977 aa).

TPR repeat units follow at residues 2-35, 53-86, 87-120, 121-154, 155-188, 189-222, 223-256, 257-290, 291-324, 325-358, 359-392, 393-426, 427-460, and 461-494; these read ISSK…SVSS, DDAR…NPLR, TDNL…QPQF, AECY…RPNF, ADAW…NPLL, VDAH…QPTF, AIAW…KPAF, PDAY…RPNS, AMAF…DPRF, LEAY…QPNH, PQAM…TTGL, SAPF…DPLA, ADAL…RPTM, and AEAH…RPDF. Residues 495 to 977 are catalytic region; that stretch reads PEATCNLLHT…ENDLEFPHDR (483 aa).

Belongs to the glycosyltransferase 41 family. O-GlcNAc transferase subfamily. In terms of assembly, interacts with TCP14 and TCP15. Interacts with ATX1.

It carries out the reaction L-seryl-[protein] + UDP-N-acetyl-alpha-D-glucosamine = 3-O-(N-acetyl-beta-D-glucosaminyl)-L-seryl-[protein] + UDP + H(+). It catalyses the reaction L-threonyl-[protein] + UDP-N-acetyl-alpha-D-glucosamine = 3-O-(N-acetyl-beta-D-glucosaminyl)-L-threonyl-[protein] + UDP + H(+). The protein operates within protein modification; protein glycosylation. Its function is as follows. O-linked N-acetylglucosamine transferase (OGT) that mediates O-glycosylation of capsid protein (CP) of virus in case of infection by Plum pox virus. OGTs catalyze the addition of nucleotide-activated sugars directly onto the polypeptide through O-glycosidic linkage with the hydroxyl of serine or threonine. Probably acts by adding O-linked sugars to yet unknown proteins. Its OGT activity has been proved in vitro but not in vivo. Required with SPY for gamete and seed development. Mediates O-glycosylation of the DELLA protein RGA, a repressor of the gibberellin (GA) signaling pathway. O-glycosylation by SEC inhibits RGA binding to four of its interactors PIF3, PIF4, JAZ1, and BZR1 that are key regulators in light, jasmonate, and brassinosteroid signaling pathways, respectively. Activates ATX1 through O-GlcNAc modification to augment ATX1-mediated H3K4me3 histone epigenetic modification at FLC locus, thus preventing premature flowering. In Arabidopsis thaliana (Mouse-ear cress), this protein is Probable UDP-N-acetylglucosamine--peptide N-acetylglucosaminyltransferase SEC.